Consider the following 344-residue polypeptide: Uroporphyrinogen decarboxylase (344 aa).

Residues 26–30 (RQAGR), Asp75, Tyr150, Ser205, and His323 each bind substrate.

Belongs to the uroporphyrinogen decarboxylase family. In terms of assembly, homodimer.

The protein resides in the cytoplasm. It carries out the reaction uroporphyrinogen III + 4 H(+) = coproporphyrinogen III + 4 CO2. Its pathway is porphyrin-containing compound metabolism; protoporphyrin-IX biosynthesis; coproporphyrinogen-III from 5-aminolevulinate: step 4/4. In terms of biological role, catalyzes the decarboxylation of four acetate groups of uroporphyrinogen-III to yield coproporphyrinogen-III. The sequence is that of Uroporphyrinogen decarboxylase from Corynebacterium diphtheriae (strain ATCC 700971 / NCTC 13129 / Biotype gravis).